We begin with the raw amino-acid sequence, 507 residues long: 2,3-bisphosphoglycerate-independent phosphoglycerate mutase (507 aa).

Mn(2+) contacts are provided by Asp-13 and Ser-63. Ser-63 serves as the catalytic Phosphoserine intermediate. Substrate contacts are provided by residues His-122, 152 to 153, Arg-184, Arg-190, 256 to 259, and Lys-330; these read RD and RADR. Mn(2+) is bound by residues Asp-397, His-401, Asp-438, His-439, and His-457.

The protein belongs to the BPG-independent phosphoglycerate mutase family. In terms of assembly, monomer. The cofactor is Mn(2+).

The enzyme catalyses (2R)-2-phosphoglycerate = (2R)-3-phosphoglycerate. The protein operates within carbohydrate degradation; glycolysis; pyruvate from D-glyceraldehyde 3-phosphate: step 3/5. Functionally, catalyzes the interconversion of 2-phosphoglycerate and 3-phosphoglycerate. In Chromobacterium violaceum (strain ATCC 12472 / DSM 30191 / JCM 1249 / CCUG 213 / NBRC 12614 / NCIMB 9131 / NCTC 9757 / MK), this protein is 2,3-bisphosphoglycerate-independent phosphoglycerate mutase.